A 108-amino-acid polypeptide reads, in one-letter code: Protein RnfH (108 aa).

This sequence belongs to the UPF0125 (RnfH) family.

This Laribacter hongkongensis (strain HLHK9) protein is Protein RnfH.